Reading from the N-terminus, the 54-residue chain is Synaptosomal-associated protein 25 (54 aa).

Belongs to the SNAP-25 family. Part of the SNARE core complex containing SNAP25, VAMP2 and STX1A; this complex binds CPLX1. Found in a complex containing SYT1, SV2B and syntaxin-1. Found in a ternary complex with STX1A and VAMP8. Interacts with HSC70 and with SYT9, forming a complex with DNAJC5. The interaction with SYT9 is inhibited in presence of calcium. Isoform 1 and isoform 2 interact with BLOC1S6. Interacts with CENPF. Interacts with EQTN. Interacts with HGS. Interacts with KCNB1 (via N-terminus); reduces the voltage-dependent potassium channel KCNB1 activity in pancreatic beta cells. Interacts with OTOF. Interacts with RIMS1. Interacts with SNAPIN. Interacts with STXBP6. Interacts with TRIM9. Interacts with ZDHHC13 (via ANK repeats). Interacts with ZDHHC17 (via ANK repeats). Associates with the BLOC-1 complex. Interacts with PLCL1 (via C2 domain). Interacts with PRRT2; this interaction may impair the formation of the SNARE complex. Interacts with alpha-synuclein/SNCA. Interacts with PRPH2. Interacts with ROM1. Interacts with STX3. The N-terminus is blocked.

Its subcellular location is the cytoplasm. It localises to the perinuclear region. The protein resides in the cell membrane. The protein localises to the synapse. It is found in the synaptosome. Its subcellular location is the photoreceptor inner segment. Functionally, t-SNARE involved in the molecular regulation of neurotransmitter release. May play an important role in the synaptic function of specific neuronal systems. Associates with proteins involved in vesicle docking and membrane fusion. Regulates plasma membrane recycling through its interaction with CENPF. Modulates the gating characteristics of the delayed rectifier voltage-dependent potassium channel KCNB1 in pancreatic beta cells. In Oryctolagus cuniculus (Rabbit), this protein is Synaptosomal-associated protein 25 (SNAP25).